A 550-amino-acid polypeptide reads, in one-letter code: ATP-dependent RNA helicase MSS116, mitochondrial (550 aa).

Residues 1-11 (MPPPPKRKWPN) are compositionally biased toward basic residues. A mitochondrion-targeting transit peptide spans 1–41 (MPPPPKRKWPNRPRGGGGANGSASGTPTTPRSTVAQQPKRP). A disordered region spans residues 1-51 (MPPPPKRKWPNRPRGGGGANGSASGTPTTPRSTVAQQPKRPKVEDAAPAAE). The short motif at 71 to 99 (FSELSSVLDKSLLDGLDKMGFEFMSPVQQ) is the Q motif element. Residues 103 to 285 (TELPSLSSDC…KIVLFPGFTH (183 aa)) enclose the Helicase ATP-binding domain. Position 116 to 123 (116 to 123 (AKTGTGKT)) interacts with ATP. A DEAD box motif is present at residues 230–233 (DEAD). Residues 316-472 (ALSALIQEEH…KVPEQEAAIT (157 aa)) form the Helicase C-terminal domain.

This sequence belongs to the DEAD box helicase family. DDX18/HAS1 subfamily.

The protein resides in the mitochondrion matrix. It carries out the reaction ATP + H2O = ADP + phosphate + H(+). In terms of biological role, ATP-dependent RNA helicase required for mitochondrial splicing of group I and II introns. Also required for efficient mitochondrial translation. This chain is ATP-dependent RNA helicase MSS116, mitochondrial (MSS116), found in Phaeosphaeria nodorum (strain SN15 / ATCC MYA-4574 / FGSC 10173) (Glume blotch fungus).